A 172-amino-acid chain; its full sequence is NAD(P)H-quinone oxidoreductase subunit I, chloroplastic (172 aa).

4Fe-4S ferredoxin-type domains lie at 55 to 84 (GRIH…VDWK) and 95 to 124 (LNYS…MTEE). The [4Fe-4S] cluster site is built by cysteine 64, cysteine 67, cysteine 70, cysteine 74, cysteine 104, cysteine 107, cysteine 110, and cysteine 114.

The protein belongs to the complex I 23 kDa subunit family. In terms of assembly, NDH is composed of at least 16 different subunits, 5 of which are encoded in the nucleus. The cofactor is [4Fe-4S] cluster.

Its subcellular location is the plastid. It localises to the chloroplast thylakoid membrane. It catalyses the reaction a plastoquinone + NADH + (n+1) H(+)(in) = a plastoquinol + NAD(+) + n H(+)(out). The enzyme catalyses a plastoquinone + NADPH + (n+1) H(+)(in) = a plastoquinol + NADP(+) + n H(+)(out). Its function is as follows. NDH shuttles electrons from NAD(P)H:plastoquinone, via FMN and iron-sulfur (Fe-S) centers, to quinones in the photosynthetic chain and possibly in a chloroplast respiratory chain. The immediate electron acceptor for the enzyme in this species is believed to be plastoquinone. Couples the redox reaction to proton translocation, and thus conserves the redox energy in a proton gradient. The sequence is that of NAD(P)H-quinone oxidoreductase subunit I, chloroplastic from Crucihimalaya wallichii (Rock-cress).